We begin with the raw amino-acid sequence, 145 residues long: uncharacterized protein (145 aa).

Disordered regions lie at residues 1–41 (MRRL…PPGT) and 122–145 (RLPSLVHGPSHPDSQHPREVPLAL). Over residues 20–34 (GGPQNGTSGCTTAPQ) the composition is skewed to polar residues. The span at 134–145 (DSQHPREVPLAL) shows a compositional bias: basic and acidic residues.

In terms of tissue distribution, ubiquitous.

This is an uncharacterized protein from Homo sapiens (Human).